A 214-amino-acid polypeptide reads, in one-letter code: Thymidylate kinase (214 aa).

Residue 10–17 (GGEGAGKS) coordinates ATP.

This sequence belongs to the thymidylate kinase family.

The catalysed reaction is dTMP + ATP = dTDP + ADP. Its function is as follows. Phosphorylation of dTMP to form dTDP in both de novo and salvage pathways of dTTP synthesis. The protein is Thymidylate kinase of Brucella suis (strain ATCC 23445 / NCTC 10510).